Consider the following 470-residue polypeptide: Ribulose bisphosphate carboxylase large chain (470 aa).

Positions 115 and 165 each coordinate substrate. Lys-167 (proton acceptor) is an active-site residue. A substrate-binding site is contributed by Lys-169. Mg(2+) is bound by residues Lys-193, Asp-195, and Glu-196. Lys-193 is subject to N6-carboxylysine. His-286 serves as the catalytic Proton acceptor. Substrate contacts are provided by Arg-287, His-319, and Ser-371.

It belongs to the RuBisCO large chain family. Type I subfamily. As to quaternary structure, heterohexadecamer of 8 large chains and 8 small chains. Requires Mg(2+) as cofactor.

It localises to the carboxysome. It carries out the reaction 2 (2R)-3-phosphoglycerate + 2 H(+) = D-ribulose 1,5-bisphosphate + CO2 + H2O. The enzyme catalyses D-ribulose 1,5-bisphosphate + O2 = 2-phosphoglycolate + (2R)-3-phosphoglycerate + 2 H(+). RuBisCO catalyzes two reactions: the carboxylation of D-ribulose 1,5-bisphosphate, the primary event in carbon dioxide fixation, as well as the oxidative fragmentation of the pentose substrate in the photorespiration process. Both reactions occur simultaneously and in competition at the same active site. The protein is Ribulose bisphosphate carboxylase large chain of Prochlorococcus marinus (strain NATL1A).